A 2243-amino-acid polypeptide reads, in one-letter code: Zinc finger FYVE domain-containing protein 26 homolog (2243 aa).

2 disordered regions span residues 386–416 (SQRK…RPTA) and 514–556 (KKKA…GKAS). Residues 393–408 (GENDEEDDEQYVDDDV) show a composition bias toward acidic residues. Position 403 is a phosphotyrosine (Y403). A compositionally biased stretch (basic and acidic residues) spans 517–528 (ASSDDESRERSN). The segment covering 534-543 (NRRKARRQRR) has biased composition (basic residues). The LRR 1 repeat unit spans residues 617 to 644 (KKIIETFHLEHSQLNRELHFMEQQQLVK). S1424 carries the phosphoserine modification. Residues 1444-1500 (DEEASHCMCCRRAAFTMLMRRHHCRRCGRVVCYACSTHRIRIPELYDELEVRICNDC) form an FYVE-type zinc finger. C1450, C1453, C1467, C1470, C1475, C1478, C1497, and C1500 together coordinate Zn(2+). A disordered region spans residues 1505 to 1534 (TPAKDQGDGTSSERSAISGQVSKSSGRSDS). Residues 1512–1534 (DGTSSERSAISGQVSKSSGRSDS) are compositionally biased toward polar residues. The stretch at 1887–1912 (YPQLANGGLNVLMDELQQLDDAQFTA) is one LRR 2 repeat.

Belongs to the ZFYVE26 family.

In terms of biological role, phosphatidylinositol 3-phosphate (PtdIns[3]P)-binding protein. Involved in autophagy. The polypeptide is Zinc finger FYVE domain-containing protein 26 homolog (Drosophila melanogaster (Fruit fly)).